A 198-amino-acid chain; its full sequence is Elongation factor Ts (198 aa).

The interval 81-84 (TDFV) is involved in Mg(2+) ion dislocation from EF-Tu.

The protein belongs to the EF-Ts family.

The protein localises to the cytoplasm. Its function is as follows. Associates with the EF-Tu.GDP complex and induces the exchange of GDP to GTP. It remains bound to the aminoacyl-tRNA.EF-Tu.GTP complex up to the GTP hydrolysis stage on the ribosome. In Leptospira biflexa serovar Patoc (strain Patoc 1 / Ames), this protein is Elongation factor Ts.